We begin with the raw amino-acid sequence, 1479 residues long: C-type mannose receptor 2 (1479 aa).

The first 30 residues, 1 to 30 (MVPIRPALAPWPRHLLRCVLLLGGLRLGHP), serve as a signal peptide directing secretion. Residues 31-1413 (ADSAAALLEP…SAALPESPVA (1383 aa)) are Extracellular-facing. The 154-residue stretch at 37-190 (LLEPDVFLIF…SHGKPCTIPF (154 aa)) folds into the Ricin B-type lectin domain. A disulfide bond links Cys-92 and Cys-111. N-linked (GlcNAc...) asparagine glycosylation is found at Asn-101 and Asn-139. Residues 181–229 (SHGKPCTIPFKYDNQWFHGCTSTGREDGHLWCATTQDYGKDERWGFCPI) enclose the Fibronectin type-II domain. 4 cysteine pairs are disulfide-bonded: Cys-186-Cys-212, Cys-200-Cys-227, Cys-265-Cys-358, and Cys-334-Cys-350. The 117-residue stretch at 243-359 (LTDSCYQFNF…CSIALPYVCK (117 aa)) folds into the C-type lectin 1 domain. Asn-363 carries an N-linked (GlcNAc...) asparagine glycan. C-type lectin domains follow at residues 388 to 504 (FQGH…SICK), 527 to 643 (HSPS…RYIC), 677 to 808 (KLRH…WICK), 831 to 950 (FQEA…YICK), 978 to 1106 (FLNK…GFIC), 1131 to 1242 (YLNH…GAVC), and 1271 to 1391 (FREH…GVVC). Intrachain disulfides connect Cys-409–Cys-503, Cys-480–Cys-495, Cys-617–Cys-634, Cys-703–Cys-807, Cys-784–Cys-799, Cys-852–Cys-949, and Cys-926–Cys-941. N-linked (GlcNAc...) asparagine glycosylation occurs at Asn-1028. Cys-1077 and Cys-1097 form a disulfide bridge. A Glycyl lysine isopeptide (Lys-Gly) (interchain with G-Cter in SUMO1) cross-link involves residue Lys-1141. Cys-1219 and Cys-1233 are oxidised to a cystine. N-linked (GlcNAc...) asparagine glycosylation is present at Asn-1348. Cys-1367 and Cys-1382 are joined by a disulfide. Residues 1414-1434 (LVVVLTAVLLLLALMTAALIL) form a helical membrane-spanning segment. Residues 1435–1479 (YRRRQSAERGSFEGARYSRSSHSGPAEATEKNILVSDMEMNEQQE) are Cytoplasmic-facing. Residues 1446–1479 (FEGARYSRSSHSGPAEATEKNILVSDMEMNEQQE) are disordered.

In terms of assembly, interacts directly with PLAUR/UPAR and PLAU/pro-UPA to form a tri-molecular complex. Interacts with collagen V and with C-terminal region of type I collagen/COL1A1. Post-translationally, phosphorylated. In terms of tissue distribution, highly expressed in heart, lung and kidney, but little or no expression in brain, thymus or adult liver. Expressed at highly endothelialized sites such as those in choroid plexus and kidney glomerulai as well as in chondrocytes in cartilaginous regions of the embryo.

It is found in the membrane. In terms of biological role, may play a role as endocytotic lectin receptor displaying calcium-dependent lectin activity. Internalizes glycosylated ligands from the extracellular space for release in an endosomal compartment via clathrin-mediated endocytosis. May be involved in plasminogen activation system controlling the extracellular level of PLAUR/PLAU, and thus may regulate protease activity at the cell surface. May contribute to cellular uptake, remodeling and degradation of extracellular collagen matrices. May participate in remodeling of extracellular matrix cooperating with the matrix metalloproteinases (MMPs). The protein is C-type mannose receptor 2 (Mrc2) of Mus musculus (Mouse).